The sequence spans 224 residues: UPF0758 protein Patl_0046 (224 aa).

An MPN domain is found at 102 to 224; sequence VFNSAQQTKH…AVSFAERGLI (123 aa). Zn(2+) is bound by residues H173, H175, and D186. Positions 173–186 match the JAMM motif motif; the sequence is HNHPSGVAEPSQAD.

Belongs to the UPF0758 family.

This Pseudoalteromonas atlantica (strain T6c / ATCC BAA-1087) protein is UPF0758 protein Patl_0046.